The sequence spans 1072 residues: Carbamoyl phosphate synthase large chain (1072 aa).

Residues 1–401 (MPKRLDINTI…SLLKAVRSLE (401 aa)) form a carboxyphosphate synthetic domain region. Positions 129, 169, 175, 176, 208, 210, 215, 241, 242, 243, 284, and 298 each coordinate ATP. The 195-residue stretch at 133–327 (RTLMQDLNEP…IAKLAAKIAV (195 aa)) folds into the ATP-grasp 1 domain. Residues Q284, E298, and N300 each contribute to the Mg(2+) site. Residues Q284, E298, and N300 each coordinate Mn(2+). The segment at 402–546 (LGIYHLELDH…YSTYADENES (145 aa)) is oligomerization domain. Residues 547-929 (IVTDRKSVVV…ALYKGLVASG (383 aa)) are carbamoyl phosphate synthetic domain. An ATP-grasp 2 domain is found at 671–861 (EAALTKLGIP…MANVATKVIL (191 aa)). Residues R707, R746, E752, G777, V778, H779, S780, Q820, and E832 each coordinate ATP. Residues Q820, E832, and N834 each contribute to the Mg(2+) site. The Mn(2+) site is built by Q820, E832, and N834. Residues 930-1072 (INIPTHGSVI…QTKRHEVVHA (143 aa)) form the MGS-like domain. The tract at residues 930 to 1072 (INIPTHGSVI…QTKRHEVVHA (143 aa)) is allosteric domain.

Belongs to the CarB family. As to quaternary structure, composed of two chains; the small (or glutamine) chain promotes the hydrolysis of glutamine to ammonia, which is used by the large (or ammonia) chain to synthesize carbamoyl phosphate. Tetramer of heterodimers (alpha,beta)4. The cofactor is Mg(2+). It depends on Mn(2+) as a cofactor.

The enzyme catalyses hydrogencarbonate + L-glutamine + 2 ATP + H2O = carbamoyl phosphate + L-glutamate + 2 ADP + phosphate + 2 H(+). It carries out the reaction hydrogencarbonate + NH4(+) + 2 ATP = carbamoyl phosphate + 2 ADP + phosphate + 2 H(+). It functions in the pathway amino-acid biosynthesis; L-arginine biosynthesis; carbamoyl phosphate from bicarbonate: step 1/1. The protein operates within pyrimidine metabolism; UMP biosynthesis via de novo pathway; (S)-dihydroorotate from bicarbonate: step 1/3. Large subunit of the glutamine-dependent carbamoyl phosphate synthetase (CPSase). CPSase catalyzes the formation of carbamoyl phosphate from the ammonia moiety of glutamine, carbonate, and phosphate donated by ATP, constituting the first step of 2 biosynthetic pathways, one leading to arginine and/or urea and the other to pyrimidine nucleotides. The large subunit (synthetase) binds the substrates ammonia (free or transferred from glutamine from the small subunit), hydrogencarbonate and ATP and carries out an ATP-coupled ligase reaction, activating hydrogencarbonate by forming carboxy phosphate which reacts with ammonia to form carbamoyl phosphate. This is Carbamoyl phosphate synthase large chain from Bacillus cereus (strain AH187).